Consider the following 509-residue polypeptide: MFS antiporter QDR1 (509 aa).

At 1–41 (MPGNREEFDIEKVLKSKKLEAIETSTEKKAPYTVFESTDKL) the chain is on the cytoplasmic side. The chain crosses the membrane as a helical span at residues 42–62 (LLIIVLSLVGFWSAISSPIYF). At 63–75 (PALPTLTKYFNTT) the chain is on the extracellular side. The helical transmembrane segment at 76–96 (PSVMNISVVAYLIFQGIAPTI) threads the bilayer. Residues 97–106 (SSNLADTFGR) are Cytoplasmic-facing. The chain crosses the membrane as a helical span at residues 107 to 129 (RPVILGSIIVFCAVCIAISQTNV). At 130–132 (YWL) the chain is on the extracellular side. Residues 133–155 (LALLRCFQAAGIAPVFAISSGVA) form a helical membrane-spanning segment. Residues 156–169 (GDICTPANRGGMVG) lie on the Cytoplasmic side of the membrane. The helical transmembrane segment at 170–190 (AVSGLQLAGNGIGGLVGAALI) threads the bilayer. The Extracellular portion of the chain corresponds to 191-197 (SGFHTWR). The helical transmembrane segment at 198 to 218 (AIFIFLAIGGGVTFIFAFLVL) threads the bilayer. Topologically, residues 219–278 (AETSRRIVGNGSIRPKNVLNKAVLIYLPHFKNKITNDYSTLQPKGPFDILGPFKIFFQKE) are cytoplasmic. A helical membrane pass occupies residues 279-299 (VFCTLLPSGMHFAAWTVSLTS). Residues 300 to 312 (LSTELESAKYNYS) lie on the Extracellular side of the membrane. A helical membrane pass occupies residues 313 to 333 (VMKVGLVYLPQGIACFIGSLI). Topologically, residues 334–370 (AGRCLNWYYRYRKNLYDKQMNDVPLNDRPPFNLVASR) are cytoplasmic. Residues 371-391 (LTLTIVPLAMMVIGLSAFGWC) traverse the membrane as a helical segment. The Extracellular portion of the chain corresponds to 392–397 (LEYKKP). Residues 398–418 (IISIIISTILISFSASVMMSI) form a helical membrane-spanning segment. The Cytoplasmic segment spans residues 419 to 432 (CTTMLVDLYPKQSG). A helical transmembrane segment spans residues 433-453 (ASASCVNLMRCWLAALFTGVL). Residues 454 to 455 (DK) are Extracellular-facing. Residues 456 to 476 (IISALGLGGTYTLLTGICLLT) traverse the membrane as a helical segment. At 477–509 (DLGLVYVLYTANQRFVNYVSPNQTAVNSDAEDY) the chain is on the cytoplasmic side.

The protein belongs to the major facilitator superfamily. CAR1 family.

It localises to the cell membrane. Its function is as follows. MFS antiporter that does not display functional linkage as drug transporter and performs functions that significantly affect biofilm development and virulence. No substrate for transport has been identified yet, but plays an important role in the growth in the host. This Candida albicans (strain SC5314 / ATCC MYA-2876) (Yeast) protein is MFS antiporter QDR1 (QDR).